We begin with the raw amino-acid sequence, 372 residues long: DNA primase small subunit PriS (372 aa).

Active-site residues include Asp-95, Asp-97, and Asp-280.

The protein belongs to the eukaryotic-type primase small subunit family. In terms of assembly, heterodimer of a small subunit (PriS) and a large subunit (PriL). Mg(2+) is required as a cofactor. Requires Mn(2+) as cofactor.

In terms of biological role, catalytic subunit of DNA primase, an RNA polymerase that catalyzes the synthesis of short RNA molecules used as primers for DNA polymerase during DNA replication. The small subunit contains the primase catalytic core and has DNA synthesis activity on its own. Binding to the large subunit stabilizes and modulates the activity, increasing the rate of DNA synthesis while decreasing the length of the DNA fragments, and conferring RNA synthesis capability. The DNA polymerase activity may enable DNA primase to also catalyze primer extension after primer synthesis. May also play a role in DNA repair. This is DNA primase small subunit PriS from Cenarchaeum symbiosum (strain A).